A 392-amino-acid chain; its full sequence is MATALYTANDFILISLPQNAQPVTAPGSKTDSWFNETLIGGRAFVSDFKIPEFKIGSLDTLIVESEELSKVDNQIGASIGKIIEILQGLNETSTNAYRTLPINNMPVPEYLENFQWQTRKFKLDKSIKDLITLISNESSQLDADVRATYANYNSAKTNLAAAERKKTGDLSVRSLHDIVKPEDFVLNSEHLTTVLVAVPKSLKSDFEKSYETLSKNVVPASASVIAEDAEYVLFNVHLFKKNVQEFTTAAREKKFIPREFNYSEELIDQLKKEHDSAASLEQSLRVQLVRLAKTAYVDVFINWFHIKALRVYVESVLRYGLPPHFNIKIIAVPPKNLSKCKSELIDAFGFLGGNAFMKDKKGKINKQDTSLHQYASLVDTEYEPFVMYIINL.

A2 is modified (N-acetylalanine).

The protein belongs to the V-ATPase C subunit family. In terms of assembly, V-ATPase is a heteromultimeric enzyme composed of a peripheral catalytic V1 complex (components A to H) attached to an integral membrane V0 proton pore complex (components: a, c, c', c'', d, e, f and VOA1). Interacts directly with VMA4.

Its subcellular location is the vacuole membrane. Subunit of the V1 complex of vacuolar(H+)-ATPase (V-ATPase), a multisubunit enzyme composed of a peripheral complex (V1) that hydrolyzes ATP and a membrane integral complex (V0) that translocates protons. V-ATPase is responsible for acidifying and maintaining the pH of intracellular compartments. Subunit C is necessary for the assembly of the catalytic sector of the enzyme and is likely to have a specific function in its catalytic activity. Reversibly leaves the enzyme after glucose depletion, causing the catalytic subcomplex V1 to detach from the V0 section. In Saccharomyces cerevisiae (strain ATCC 204508 / S288c) (Baker's yeast), this protein is V-type proton ATPase subunit C.